We begin with the raw amino-acid sequence, 118 residues long: Melanoma antigen recognized by T-cells 1 (118 aa).

Residues 27–47 (AAGIGILTVILGVLLLIGCWY) form a helical membrane-spanning segment. At 48–118 (CRRRNGYRAL…AEQSPPPYSP (71 aa)) the chain is on the cytoplasmic side. A disordered region spans residues 78–118 (GFDHRDSKVSLQEKNCEPVVPNAPPAYEKLSAEQSPPPYSP). Ser108 bears the Phosphoserine mark.

As to quaternary structure, interacts with PMEL. Interacts with GPR143. Post-translationally, acylated. In terms of tissue distribution, expression is restricted to melanoma and melanocyte cell lines and retina.

The protein localises to the endoplasmic reticulum membrane. The protein resides in the golgi apparatus. Its subcellular location is the trans-Golgi network membrane. It is found in the melanosome. Involved in melanosome biogenesis by ensuring the stability of GPR143. Plays a vital role in the expression, stability, trafficking, and processing of melanocyte protein PMEL, which is critical to the formation of stage II melanosomes. This Homo sapiens (Human) protein is Melanoma antigen recognized by T-cells 1 (MLANA).